Here is a 501-residue protein sequence, read N- to C-terminus: Probable Xaa-Pro aminopeptidase pepP (501 aa).

Positions 1 to 25 (MNYHSFLPLRRSSLSHSTTPPSKSR) are disordered. A compositionally biased stretch (polar residues) spans 12 to 25 (SSLSHSTTPPSKSR). Mn(2+) contacts are provided by Asp-298, Asp-309, Glu-432, and Glu-472.

This sequence belongs to the peptidase M24B family. Requires Mn(2+) as cofactor.

It carries out the reaction Release of any N-terminal amino acid, including proline, that is linked to proline, even from a dipeptide or tripeptide.. Its function is as follows. Catalyzes the removal of a penultimate prolyl residue from the N-termini of peptides. The protein is Probable Xaa-Pro aminopeptidase pepP (pepP) of Metarhizium acridum (strain CQMa 102).